A 223-amino-acid chain; its full sequence is Large ribosomal subunit protein uL4 (223 aa).

A disordered region spans residues 47 to 72 (GTASTKTRGEVAGGGRKPWPQKHTGR).

Belongs to the universal ribosomal protein uL4 family. In terms of assembly, part of the 50S ribosomal subunit.

Functionally, one of the primary rRNA binding proteins, this protein initially binds near the 5'-end of the 23S rRNA. It is important during the early stages of 50S assembly. It makes multiple contacts with different domains of the 23S rRNA in the assembled 50S subunit and ribosome. Its function is as follows. Forms part of the polypeptide exit tunnel. In Fervidobacterium nodosum (strain ATCC 35602 / DSM 5306 / Rt17-B1), this protein is Large ribosomal subunit protein uL4.